A 538-amino-acid polypeptide reads, in one-letter code: Cytochrome P450 52A4 (538 aa).

Residues 27–46 (WYILIPTILLTLNFLSILHT) form a helical membrane-spanning segment. Cys485 contributes to the heme binding site.

The protein belongs to the cytochrome P450 family. Heme is required as a cofactor.

The protein resides in the membrane. Together with an NADPH cytochrome P450 the enzyme system catalyzes the terminal hydroxylation as the first step in the assimilation of alkanes and fatty acids. This chain is Cytochrome P450 52A4 (CYP52A4), found in Candida maltosa (Yeast).